The chain runs to 1052 residues: uncharacterized protein (1052 aa).

The 173-residue stretch at 389–561 (WINKGKTFAI…NKGGNYIMIN (173 aa)) folds into the Helicase ATP-binding domain. 400-407 (SAMGTGKT) is an ATP binding site.

It belongs to the mimivirus R1 family.

This is an uncharacterized protein from Acanthamoeba polyphaga mimivirus (APMV).